The sequence spans 568 residues: Poly(A) polymerase (568 aa).

ATP-binding positions include 87–89, 99–102, 100–102, D154, K215, Y224, and 233–234; these read YGS, SDID, DID, and GV. D100, D102, and D154 together coordinate Mg(2+). S452 and S550 each carry phosphoserine. The disordered stretch occupies residues 525 to 568; sequence NEKRPSKKSKRKNLDARHETVKRSKSDAASGDNINGTTAAVDVN. The span at 536 to 550 shows a compositional bias: basic and acidic residues; sequence KNLDARHETVKRSKS.

It belongs to the poly(A) polymerase family. As to quaternary structure, component of the cleavage and polyadenylation factor (CPF) complex, which is composed of PTI1, SYC1, SSU72, GLC7, MPE1, REF2, PFS2, PTA1, YSH1/BRR5, SWD2, CFT2/YDH1, YTH1, CFT1/YHH1, FIP1 and PAP1. Interacts with FIR1 and RRP6. Mg(2+) serves as cofactor. The cofactor is Mn(2+).

It localises to the nucleus. The catalysed reaction is RNA(n) + ATP = RNA(n)-3'-adenine ribonucleotide + diphosphate. In terms of biological role, polymerase component of the cleavage and polyadenylation factor (CPF) complex, which plays a key role in polyadenylation-dependent pre-mRNA 3'-end formation and cooperates with cleavage factors including the CFIA complex and NAB4/CFIB. The protein is Poly(A) polymerase (PAP1) of Saccharomyces cerevisiae (strain ATCC 204508 / S288c) (Baker's yeast).